The primary structure comprises 53 residues: Lantibiotic mutacin-2 (53 aa).

Positions 1 to 26 are excised as a propeptide; sequence MNKLNSNAVVSLNEVSDSELDTILGG. Positions 36-41 form a cross-link, beta-methyllanthionine (Thr-Cys); sequence TVSYEC. 2 cross-links (lanthionine (Ser-Cys)) span residues 38–52 and 45–53; these read SYECRMNSWQHVFTC and SWQHVFTCC. 2,3-didehydrobutyrine is present on threonine 51.

Post-translationally, maturation of lantibiotics involves the enzymatic conversion of Thr, and Ser into dehydrated AA and the formation of thioether bonds with cysteine. This is followed by membrane translocation and cleavage of the modified precursor. It is not established whether the 2,3-didehydrobutyrine is the E- or Z-isomer.

Lanthionine-containing peptide antibiotic (lantibiotic) active on Gram-positive bacteria including M.luteus, S.aureus, Streptococcus, P.micros, P.acidilactici, C.sporogenes, C.diphtheriae, A.viscosus, G.vaginalis, P.acnes, L.monocytogenes and M.smegmatis, and Gram-negative bacteria including C.jejuni, H.pylori and N.gonorrhoeae. Transiently and partially depolarizes the transmembrane electrical potential and pH gradient of susceptible cells, inhibits the uptake of amino acids and depletes the intracellular ATP pool. This Streptococcus mutans protein is Lantibiotic mutacin-2.